The sequence spans 680 residues: MKSQNKYSIRKFSVGASSILIATLLFLSGGQAQAAEKQVNMGNSQEDTVTAQSIGDQQTRENANYQRENGVDEQQHTENLTKNLHNDKTISEENHRKTDDLNKDQLKDDKKSSLNNKNIQRDTTKNNNANPSDVNQGLEQAINDGKQSKVASQQQSKEADNSQDSNANNNLPSQSRIKEAPSLNKLDQTSQREIVNETEIEKVQPQQNNQANDKITNYNFNNEQEVKPQKDEKTLSVSDLKNNQKSPVEPTKDNDKKNGLNLLKSSAVATLPNKGTKELTAKAKDDQTNKVAKQGQYKNQDPIVLVHGFNGFTDDINPSVLAHYWGGNKMNIRQDLEENGYKAYEASISAFGSNYDRAVELYYYIKGGRVDYGAAHAAKYGHERYGKTYEGIYKDWKPGQKVHLVGHSMGGQTIRQLEELLRNGNREEIEYQKKHGGEISPLFKGNHDNMISSITTLGTPHNGTHASDLAGNEALVRQIVFDIGKMFGNKNSRVDFGLAQWGLKQKPNESYIDYVKRVKQSNLWKSKDNGFYDLTREGATDLNRKTSLNPNIVYKTYTGEATHKALNSDRQKADLNMFFPFVITGNLIGKATEKEWRENDGLVSVISSQHPFNQAYTKATDKIQKGIWQVTPTKHDWDHVDFVGQDSSDTVRTREELQDFWHHLADDLVKTEKLTDTKQA.

Positions 1 to 34 (MKSQNKYSIRKFSVGASSILIATLLFLSGGQAQA) are cleaved as a signal peptide. The propeptide occupies 35-290 (AEKQVNMGNS…AKAKDDQTNK (256 aa)). A disordered region spans residues 82 to 259 (KNLHNDKTIS…PTKDNDKKNG (178 aa)). A compositionally biased stretch (basic and acidic residues) spans 84–112 (LHNDKTISEENHRKTDDLNKDQLKDDKKS). Positions 125–138 (KNNNANPSDVNQGL) are enriched in polar residues. Residues 148–170 (SKVASQQQSKEADNSQDSNANNN) are compositionally biased toward low complexity. The span at 204 to 223 (QPQQNNQANDKITNYNFNNE) shows a compositional bias: polar residues. A compositionally biased stretch (basic and acidic residues) spans 224–234 (QEVKPQKDEKT). Positions 235–246 (LSVSDLKNNQKS) are enriched in polar residues. Ser-408 serves as the catalytic Nucleophile. The active-site Charge relay system is Asp-600. Asp-638 lines the Ca(2+) pocket. His-639 (charge relay system) is an active-site residue. Asp-641, Asp-646, and Asp-649 together coordinate Ca(2+).

Belongs to the AB hydrolase superfamily. Lipase family.

The protein resides in the secreted. It catalyses the reaction a triacylglycerol + H2O = a diacylglycerol + a fatty acid + H(+). The protein is Lipase 1 (lip1) of Staphylococcus aureus (strain MSSA476).